A 282-amino-acid polypeptide reads, in one-letter code: Undecaprenyl-diphosphatase (282 aa).

7 helical membrane passes run 40-60 (GAAF…IYFF), 85-105 (AKMG…GLLF), 117-137 (YWIS…EWLI), 158-178 (ALII…RSGV), 193-213 (AARF…IYQL), 231-251 (IVAT…LITF), and 258-278 (AVFI…IATG).

It belongs to the UppP family.

The protein resides in the cell inner membrane. It catalyses the reaction di-trans,octa-cis-undecaprenyl diphosphate + H2O = di-trans,octa-cis-undecaprenyl phosphate + phosphate + H(+). Catalyzes the dephosphorylation of undecaprenyl diphosphate (UPP). Confers resistance to bacitracin. This is Undecaprenyl-diphosphatase from Prosthecochloris aestuarii (strain DSM 271 / SK 413).